The following is a 154-amino-acid chain: MADSGGIKVLSENRQARFQYEILETFETGIELLGTEVKSIRAGKVNLRDGFALVRNGEVWLHNIHISPHQQASAYYNHDPLRTRKLLMHREEIRKLIGKVEQKGLTLVPLKMYLKQGWVKVTLGLGRGKKLHDKRETERRRQDQRDIQRAIKRA.

Residues Lys130–Ala154 form a disordered region. Basic and acidic residues predominate over residues Asp133 to Ala154.

The protein belongs to the SmpB family.

It is found in the cytoplasm. Functionally, required for rescue of stalled ribosomes mediated by trans-translation. Binds to transfer-messenger RNA (tmRNA), required for stable association of tmRNA with ribosomes. tmRNA and SmpB together mimic tRNA shape, replacing the anticodon stem-loop with SmpB. tmRNA is encoded by the ssrA gene; the 2 termini fold to resemble tRNA(Ala) and it encodes a 'tag peptide', a short internal open reading frame. During trans-translation Ala-aminoacylated tmRNA acts like a tRNA, entering the A-site of stalled ribosomes, displacing the stalled mRNA. The ribosome then switches to translate the ORF on the tmRNA; the nascent peptide is terminated with the 'tag peptide' encoded by the tmRNA and targeted for degradation. The ribosome is freed to recommence translation, which seems to be the essential function of trans-translation. This Synechococcus elongatus (strain ATCC 33912 / PCC 7942 / FACHB-805) (Anacystis nidulans R2) protein is SsrA-binding protein.